The following is a 289-amino-acid chain: Proteasome subunit beta (289 aa).

A propeptide spans 1–59 (removed in mature form; by autocatalysis); the sequence is MEHTPRNAGFALPAAYMSTMTSSFIDFLKAEAPDLLPRARVENMPAVPGGGSAFEPPHG. Thr60 (nucleophile) is an active-site residue.

It belongs to the peptidase T1B family. In terms of assembly, the 20S proteasome core is composed of 14 alpha and 14 beta subunits that assemble into four stacked heptameric rings, resulting in a barrel-shaped structure. The two inner rings, each composed of seven catalytic beta subunits, are sandwiched by two outer rings, each composed of seven alpha subunits. The catalytic chamber with the active sites is on the inside of the barrel. Has a gated structure, the ends of the cylinder being occluded by the N-termini of the alpha-subunits. Is capped by the proteasome-associated ATPase, ARC.

It localises to the cytoplasm. It carries out the reaction Cleavage of peptide bonds with very broad specificity.. It participates in protein degradation; proteasomal Pup-dependent pathway. Its activity is regulated as follows. The formation of the proteasomal ATPase ARC-20S proteasome complex, likely via the docking of the C-termini of ARC into the intersubunit pockets in the alpha-rings, may trigger opening of the gate for substrate entry. Interconversion between the open-gate and close-gate conformations leads to a dynamic regulation of the 20S proteasome proteolysis activity. Component of the proteasome core, a large protease complex with broad specificity involved in protein degradation. The chain is Proteasome subunit beta from Saccharomonospora viridis (strain ATCC 15386 / DSM 43017 / JCM 3036 / CCUG 5913 / NBRC 12207 / NCIMB 9602 / P101) (Thermoactinomyces viridis).